Here is a 467-residue protein sequence, read N- to C-terminus: UBX domain-containing protein 7 (467 aa).

Position 2 is an N-acetylalanine (Ala2). Positions 2–54 (AAHGGSAASSALKGLIQQFTAITGASESVGKHMLEACNNNLEMAVTMFLDGGG) constitute a UBA domain. The segment at 57–77 (EEPSTSSASVSTVRPHTEEEV) is disordered. The segment covering 59–70 (PSTSSASVSTVR) has biased composition (polar residues). Residues Lys84 and Lys112 each participate in a glycyl lysine isopeptide (Lys-Gly) (interchain with G-Cter in SUMO2) cross-link. Residues 240-260 (GQLDGLSSSPPKKCARSESLI) are disordered. A phosphoserine mark is found at Ser256, Ser258, Ser263, and Ser266. One copy of the ubiquitin-interacting motif (UIM) repeat lies at 263 to 282 (SEDSQLEAAIRASLQETHFD). Residues 281-364 (FDSAQAKQDS…TATNHQGLPS (84 aa)) form a disordered region. Over residues 330–344 (HKDLGHRKEENRRPL) the composition is skewed to basic and acidic residues. Position 373 is a phosphoserine (Ser373). The UBX domain occupies 386 to 463 (VNGPKAQLML…GLCPQETVFV (78 aa)).

As to quaternary structure, interacts with neddylated CUL2, ubiquitinated HIF1A, and VCP/p97.

Its subcellular location is the nucleus. Ubiquitin-binding adapter that links a subset of NEDD8-associated cullin ring ligases (CRLs) to the segregase VCP/p97, to regulate turnover of their ubiquitination substrates. This is UBX domain-containing protein 7 (Ubxn7) from Mus musculus (Mouse).